The chain runs to 98 residues: Class II hydrophobin 1 (98 aa).

Residues 1-16 (MQFFTTVVLFAAAAMA) form the signal peptide. 4 disulfides stabilise this stretch: cysteine 29/cysteine 79, cysteine 39/cysteine 70, cysteine 40/cysteine 52, and cysteine 80/cysteine 92.

This sequence belongs to the cerato-ulmin hydrophobin family. In terms of assembly, homodimer. Homodimers further self-assemble to form highly ordered films at water-air interfaces through intermolecular interactions. Expressed in mycelium, conidiating mycelium and aerial hyphae.

It is found in the secreted. Its subcellular location is the cell wall. Its function is as follows. Aerial growth, conidiation, and dispersal of filamentous fungi in the environment rely upon a capability of their secreting small amphipathic proteins called hydrophobins (HPBs) with low sequence identity. Class I can self-assemble into an outermost layer of rodlet bundles on aerial cell surfaces, conferring cellular hydrophobicity that supports fungal growth, development and dispersal; whereas Class II form highly ordered films at water-air interfaces through intermolecular interactions but contribute nothing to the rodlet structure. Hyd1 is a class II hydrophobin that plays probably a role during conidiophore development and in intraspecific signaling or hyphal fusion. Hyd1 and Hyd3 are jointly required for conidial hydrophobicity and dispersal, but seem not to be involved in mycelia hydrophobicity. Inhibits conidial germination in environments not suitable for mycelial growth. Not necessary for root adhesion and colonization. The polypeptide is Class II hydrophobin 1 (Bionectria ochroleuca (Gliocladium roseum)).